We begin with the raw amino-acid sequence, 947 residues long: Valine--tRNA ligase (947 aa).

The 'HIGH' region signature appears at 45 to 55 (PNVTGSLHMGH). The short motif at 591–595 (KMSKS) is the 'KMSKS' region element. An ATP-binding site is contributed by Lys594. Positions 879–943 (DLAAEQARLE…ASLRTALTRV (65 aa)) form a coiled coil.

It belongs to the class-I aminoacyl-tRNA synthetase family. ValS type 1 subfamily. Monomer.

Its subcellular location is the cytoplasm. It catalyses the reaction tRNA(Val) + L-valine + ATP = L-valyl-tRNA(Val) + AMP + diphosphate. Functionally, catalyzes the attachment of valine to tRNA(Val). As ValRS can inadvertently accommodate and process structurally similar amino acids such as threonine, to avoid such errors, it has a 'posttransfer' editing activity that hydrolyzes mischarged Thr-tRNA(Val) in a tRNA-dependent manner. The chain is Valine--tRNA ligase from Agrobacterium fabrum (strain C58 / ATCC 33970) (Agrobacterium tumefaciens (strain C58)).